We begin with the raw amino-acid sequence, 76 residues long: MCVMDTRERALIRQSGLPEIILSAKYPVCVRTESGKFIDSNSVFLHLIKCQNSNSEIWFSGIDIDTQILFHTVEVD.

The protein localises to the cytoplasm. In terms of biological role, this protein is essential for positively regulating the expression of transfer genes that are involved in the conjugal transfer of DNA between bacterial cells. This chain is Protein TraJ (traJ), found in Escherichia coli.